Consider the following 126-residue polypeptide: Fumarate reductase subunit C (126 aa).

Helical transmembrane passes span 30–50, 64–84, and 105–125; these read IFVAWFVLYLVLVLRAVGAGG, VVVVLNVVALSFLLLHAVTWF, and VLAGHYAAWLVVSVIVAWMVL.

Belongs to the FrdC family. In terms of assembly, part of an enzyme complex containing four subunits: a flavoprotein (FrdA), an iron-sulfur protein (FrdB), and two hydrophobic anchor proteins (FrdC and FrdD).

The protein localises to the cell membrane. Anchors the catalytic components of the fumarate reductase complex to the cell membrane, binds quinones. The protein is Fumarate reductase subunit C of Mycobacterium tuberculosis (strain CDC 1551 / Oshkosh).